Consider the following 328-residue polypeptide: Cytochrome f (328 aa).

The N-terminal stretch at 1–44 (MRTPDFSAIWQASKQLTARIILLAFATFALYVFHDLAFPQGAAA) is a signal peptide. Heme contacts are provided by Tyr-45, Cys-66, Cys-69, and His-70. Residues 294–314 (IKGLMVFLAGIMLAQILLVIK) form a helical membrane-spanning segment.

Belongs to the cytochrome f family. The 4 large subunits of the cytochrome b6-f complex are cytochrome b6, subunit IV (17 kDa polypeptide, PetD), cytochrome f and the Rieske protein, while the 4 small subunits are PetG, PetL, PetM and PetN. The complex functions as a dimer. The cofactor is heme.

It is found in the cellular thylakoid membrane. Component of the cytochrome b6-f complex, which mediates electron transfer between photosystem II (PSII) and photosystem I (PSI), cyclic electron flow around PSI, and state transitions. The polypeptide is Cytochrome f (Rippkaea orientalis (strain PCC 8801 / RF-1) (Cyanothece sp. (strain PCC 8801))).